Here is a 347-residue protein sequence, read N- to C-terminus: Beta-hexosaminidase (347 aa).

Residues D62, R70, R134, and 164-165 each bind substrate; that span reads KH. The active-site Proton donor/acceptor is H177. The active-site Nucleophile is D249.

It belongs to the glycosyl hydrolase 3 family. NagZ subfamily.

The protein localises to the cytoplasm. It catalyses the reaction Hydrolysis of terminal non-reducing N-acetyl-D-hexosamine residues in N-acetyl-beta-D-hexosaminides.. It functions in the pathway cell wall biogenesis; peptidoglycan recycling. In terms of biological role, plays a role in peptidoglycan recycling by cleaving the terminal beta-1,4-linked N-acetylglucosamine (GlcNAc) from peptide-linked peptidoglycan fragments, giving rise to free GlcNAc, anhydro-N-acetylmuramic acid and anhydro-N-acetylmuramic acid-linked peptides. In Mannheimia succiniciproducens (strain KCTC 0769BP / MBEL55E), this protein is Beta-hexosaminidase.